The following is a 610-amino-acid chain: Myosin light chain kinase 2, skeletal/cardiac muscle (610 aa).

2 disordered regions span residues 1-168 and 196-240; these read MATE…HSPS and VSET…DTSQ. N-acetylalanine is present on A2. Composition is skewed to basic and acidic residues over residues 32–63 and 70–82; these read SEKE…KKNP and KTPE…KKGD. Residues 94–109 are compositionally biased toward gly residues; it reads SGEGDGGGGPAEGGTG. Over residues 141-157 the composition is skewed to basic and acidic residues; that stretch reads GEAKAGKKAAECREAGR. Residues S160, S166, and S168 each carry the phosphoserine modification. The Protein kinase domain maps to 299 to 554; the sequence is MNSKEALGGG…AEQCLAHPWL (256 aa). ATP-binding positions include 305 to 313 and K328; that span reads LGGGKFGAV. The active-site Proton acceptor is the D420. Position 459 is a phosphothreonine (T459). A calmodulin-binding region spans residues 588–600; it reads IAVSAANRFKKIS.

This sequence belongs to the protein kinase superfamily. CAMK Ser/Thr protein kinase family. May interact with centrin.

It is found in the cytoplasm. The catalysed reaction is L-seryl-[myosin light chain] + ATP = O-phospho-L-seryl-[myosin light chain] + ADP + H(+). It carries out the reaction L-threonyl-[myosin light chain] + ATP = O-phospho-L-threonyl-[myosin light chain] + ADP + H(+). In terms of biological role, implicated in the level of global muscle contraction and cardiac function. Phosphorylates a specific serine in the N-terminus of a myosin light chain. The protein is Myosin light chain kinase 2, skeletal/cardiac muscle (Mylk2) of Rattus norvegicus (Rat).